The chain runs to 660 residues: Leucine-rich repeat transmembrane protein FLRT2 (660 aa).

The first 35 residues, 1-35 (MGLQTTKWPGRGAFILKFWLIISLGLYLQVSKLLA), serve as a signal peptide directing secretion. 2 disulfide bridges follow: cysteine 36-cysteine 42 and cysteine 40-cysteine 49. Residues 36–63 (CPSVCRCDRNFVYCNERSLTSVPLGIPE) form the LRRNT domain. Over 36-540 (CPSVCRCDRN…QTTSHSMGSP (505 aa)) the chain is Extracellular. LRR repeat units follow at residues 62–87 (PEGV…LHNV), 88–108 (QSVH…MNLP), 109–131 (KNVR…ALAQ), 132–157 (LLKL…AFRE), 159–181 (ISLK…LPVD), 183–202 (QELR…AFQN), 203–228 (LTSL…TFSH), 229–251 (LTKL…DLPG), 252–274 (THLI…AFAN), and 275–298 (LRKL…VFDH). A glycan (N-linked (GlcNAc...) asparagine) is linked at asparagine 202. Residues 310–362 (NPWFCDCSIKWVTEWLKYIPSSLNVRGFMCQGPEQVRGMAVRELNMNLLSCPT) form the LRRCT domain. 2 cysteine pairs are disulfide-bonded: cysteine 314/cysteine 339 and cysteine 316/cysteine 360. The segment covering 371–396 (TPAPSTVSPTTQSPTLSVPSPSRGSV) has biased composition (low complexity). Residues 371–413 (TPAPSTVSPTTQSPTLSVPSPSRGSVPPAPTPSKLPTIPDWDG) are disordered. The region spanning 419 to 517 (PPISERIQLS…ICSEATTHAS (99 aa)) is the Fibronectin type-III domain. Residues 541–561 (FLLAGLIGGAVIFVLVVLLSV) traverse the membrane as a helical segment. Residues 562 to 660 (FCWHMHKKGR…SVPDLEHCHT (99 aa)) are Cytoplasmic-facing.

Self-associates (via leucine-rich repeats), giving rise to homooligomers. Interacts with FGFR1. Interacts with FGFR2. Interacts (via extracellular domain) with ADGRL1/LPHN1. Interacts (via extracellular domain) with ADGRL3 (via olfactomedin-like domain). Interacts (via extracellular domain) with UNC5D (via the first Ig-like domain). Can also interact (via extracellular domain) with UNC5B, but with much lower affinity. Interacts (via extracellular domain) with FN1. In terms of processing, N-glycosylated. Proteolytic cleavage in the juxtamembrane region gives rise to a soluble ectodomain. Cleavage is probably effected by a metalloprotease. Detected in adult brain (at protein level).

It is found in the cell membrane. It localises to the endoplasmic reticulum membrane. The protein resides in the cell junction. The protein localises to the focal adhesion. Its subcellular location is the secreted. It is found in the extracellular space. It localises to the extracellular matrix. The protein resides in the synapse. The protein localises to the synaptosome. Its subcellular location is the microsome membrane. Functions in cell-cell adhesion, cell migration and axon guidance. Mediates cell-cell adhesion via its interactions with ADGRL3 and probably also other latrophilins that are expressed at the surface of adjacent cells. May play a role in the migration of cortical neurons during brain development via its interaction with UNC5D. Mediates axon growth cone collapse and plays a repulsive role in neuron guidance via its interaction with UNC5D, and possibly also other UNC-5 family members. Plays a role in fibroblast growth factor-mediated signaling cascades. Required for normal organization of the cardiac basement membrane during embryogenesis, and for normal embryonic epicardium and heart morphogenesis. The polypeptide is Leucine-rich repeat transmembrane protein FLRT2 (Mus musculus (Mouse)).